A 226-amino-acid chain; its full sequence is Lipoprotein-releasing system ATP-binding protein LolD (226 aa).

The ABC transporter domain occupies 6–226; that stretch reads IELKSVERHY…TLADGKVVPL (221 aa). ATP is bound at residue 42 to 49; the sequence is APSGTGKS.

This sequence belongs to the ABC transporter superfamily. Lipoprotein translocase (TC 3.A.1.125) family. In terms of assembly, the complex is composed of two ATP-binding proteins (LolD) and two transmembrane proteins (LolC and LolE).

It is found in the cell inner membrane. Its function is as follows. Part of the ABC transporter complex LolCDE involved in the translocation of mature outer membrane-directed lipoproteins, from the inner membrane to the periplasmic chaperone, LolA. Responsible for the formation of the LolA-lipoprotein complex in an ATP-dependent manner. In Mesorhizobium japonicum (strain LMG 29417 / CECT 9101 / MAFF 303099) (Mesorhizobium loti (strain MAFF 303099)), this protein is Lipoprotein-releasing system ATP-binding protein LolD.